The following is a 267-amino-acid chain: 4-hydroxy-tetrahydrodipicolinate reductase (267 aa).

NAD(+) contacts are provided by residues 12 to 17, 100 to 102, and 126 to 129; these read GPRGRM, GTT, and APNF. The Proton donor/acceptor role is filled by histidine 156. Histidine 157 lines the (S)-2,3,4,5-tetrahydrodipicolinate pocket. Lysine 160 (proton donor) is an active-site residue. 166–167 is a (S)-2,3,4,5-tetrahydrodipicolinate binding site; it reads GT.

Belongs to the DapB family.

It localises to the cytoplasm. The catalysed reaction is (S)-2,3,4,5-tetrahydrodipicolinate + NAD(+) + H2O = (2S,4S)-4-hydroxy-2,3,4,5-tetrahydrodipicolinate + NADH + H(+). The enzyme catalyses (S)-2,3,4,5-tetrahydrodipicolinate + NADP(+) + H2O = (2S,4S)-4-hydroxy-2,3,4,5-tetrahydrodipicolinate + NADPH + H(+). It participates in amino-acid biosynthesis; L-lysine biosynthesis via DAP pathway; (S)-tetrahydrodipicolinate from L-aspartate: step 4/4. Its function is as follows. Catalyzes the conversion of 4-hydroxy-tetrahydrodipicolinate (HTPA) to tetrahydrodipicolinate. In Bacillus velezensis (strain DSM 23117 / BGSC 10A6 / LMG 26770 / FZB42) (Bacillus amyloliquefaciens subsp. plantarum), this protein is 4-hydroxy-tetrahydrodipicolinate reductase.